We begin with the raw amino-acid sequence, 518 residues long: Efflux pump terJ (518 aa).

Residues isoleucine 43–valine 63 form a helical membrane-spanning segment. Asparagine 79 is a glycosylation site (N-linked (GlcNAc...) asparagine). Transmembrane regions (helical) follow at residues glutamine 82 to glycine 102, leucine 112 to glutamate 132, glycine 135 to proline 155, alanine 177 to alanine 197, tryptophan 204 to valine 224, isoleucine 244 to alanine 264, proline 272 to glutamate 292, phenylalanine 311 to tryptophan 331, glycine 339 to alanine 359, glycine 364 to cysteine 384, tryptophan 400 to alanine 420, and serine 439 to valine 459. Asparagine 466 is a glycosylation site (N-linked (GlcNAc...) asparagine). A helical transmembrane segment spans residues alanine 477–leucine 497.

It belongs to the major facilitator superfamily.

It is found in the cell membrane. Functionally, efflux pump that might be required for efficient secretion of terrein or other secondary metabolies produced by the terrein genne cluster. The sequence is that of Efflux pump terJ from Aspergillus terreus (strain NIH 2624 / FGSC A1156).